Reading from the N-terminus, the 453-residue chain is CBL-interacting protein kinase 24 (453 aa).

A Protein kinase domain is found at 18–271 (YEVGRTIGQG…IEQIREDTWF (254 aa)). Residues 24–32 (IGQGTFAKV) and Lys-47 contribute to the ATP site. Catalysis depends on Asp-141, which acts as the Proton acceptor. The interval 159–186 (DFGLSTLAQKGVGLLHTTCGTPNYVAPE) is activation loop. The NAF domain maps to 310-336 (NDGGPLVMNAFEMITLSQGLDLSALFD). Positions 343–372 (KRQTRFVSRKPAKTIVATIEVVAETMGLKV) are PPI.

It belongs to the protein kinase superfamily. CAMK Ser/Thr protein kinase family. SNF1 subfamily. Interacts with CBL4. It depends on Mn(2+) as a cofactor.

The enzyme catalyses L-seryl-[protein] + ATP = O-phospho-L-seryl-[protein] + ADP + H(+). It carries out the reaction L-threonyl-[protein] + ATP = O-phospho-L-threonyl-[protein] + ADP + H(+). Involved in the regulatory pathway for the control of intracellular Na(+) and K(+) homeostasis and salt tolerance. Operates in synergy with CBL4 to activate the plasma membrane Na(+)/H(+) antiporter SOS1. CIPK serine-threonine protein kinases interact with CBL proteins. Binding of a CBL protein to the regulatory NAF domain of CIPK protein lead to the activation of the kinase in a calcium-dependent manner. The polypeptide is CBL-interacting protein kinase 24 (CIPK24) (Oryza sativa subsp. japonica (Rice)).